Consider the following 217-residue polypeptide: Probable transaldolase (217 aa).

Lysine 83 functions as the Schiff-base intermediate with substrate in the catalytic mechanism.

The protein belongs to the transaldolase family. Type 3B subfamily.

It localises to the cytoplasm. It carries out the reaction D-sedoheptulose 7-phosphate + D-glyceraldehyde 3-phosphate = D-erythrose 4-phosphate + beta-D-fructose 6-phosphate. The protein operates within carbohydrate degradation; pentose phosphate pathway; D-glyceraldehyde 3-phosphate and beta-D-fructose 6-phosphate from D-ribose 5-phosphate and D-xylulose 5-phosphate (non-oxidative stage): step 2/3. Functionally, transaldolase is important for the balance of metabolites in the pentose-phosphate pathway. In Clostridium botulinum (strain Hall / ATCC 3502 / NCTC 13319 / Type A), this protein is Probable transaldolase.